Reading from the N-terminus, the 244-residue chain is 5-oxoprolinase subunit A (244 aa).

Belongs to the LamB/PxpA family. Forms a complex composed of PxpA, PxpB and PxpC.

The catalysed reaction is 5-oxo-L-proline + ATP + 2 H2O = L-glutamate + ADP + phosphate + H(+). Catalyzes the cleavage of 5-oxoproline to form L-glutamate coupled to the hydrolysis of ATP to ADP and inorganic phosphate. The sequence is that of 5-oxoprolinase subunit A from Escherichia coli (strain SMS-3-5 / SECEC).